Reading from the N-terminus, the 148-residue chain is Cysteine proteinase inhibitor 5 (148 aa).

The signal sequence occupies residues 1–25 (MASKLYYAVAPLVLVLLLLAPLSSA). A Secondary area of contact motif is present at residues 99-103 (QVVSG).

The protein belongs to the cystatin family. Phytocystatin subfamily.

The protein localises to the secreted. In terms of biological role, specific inhibitor of cysteine proteinases. Probably involved in the regulation of endogenous processes and in defense against pests and pathogens. The polypeptide is Cysteine proteinase inhibitor 5 (Oryza sativa subsp. japonica (Rice)).